Reading from the N-terminus, the 101-residue chain is Putative regulatory protein Csac_2087 (101 aa).

This sequence belongs to the RemA family.

The chain is Putative regulatory protein Csac_2087 from Caldicellulosiruptor saccharolyticus (strain ATCC 43494 / DSM 8903 / Tp8T 6331).